Here is a 173-residue protein sequence, read N- to C-terminus: MANQELIDALRDAEAVKFGEFELSHGGTSEYYVDKYVFETDPGCLRQIADAFADRVGDAKLAGVALGAVPLVAATAVETDSPYVIVRKQKKEYGTGNQIEGDFDAGEEVVVLEDIATTGQSAIDAVEALREAGATVDRVIVVVDREEGARENLAEHDIELESLVTASDLLADR.

5-phospho-alpha-D-ribose 1-diphosphate contacts are provided by residues Arg87, Lys88, Lys91, and 113 to 121 (EDIATTGQS). Residues Thr117 and Arg145 each coordinate orotate.

The protein belongs to the purine/pyrimidine phosphoribosyltransferase family. PyrE subfamily. As to quaternary structure, homodimer. Requires Mg(2+) as cofactor.

The catalysed reaction is orotidine 5'-phosphate + diphosphate = orotate + 5-phospho-alpha-D-ribose 1-diphosphate. It functions in the pathway pyrimidine metabolism; UMP biosynthesis via de novo pathway; UMP from orotate: step 1/2. In terms of biological role, catalyzes the transfer of a ribosyl phosphate group from 5-phosphoribose 1-diphosphate to orotate, leading to the formation of orotidine monophosphate (OMP). The polypeptide is Orotate phosphoribosyltransferase (Natronomonas pharaonis (strain ATCC 35678 / DSM 2160 / CIP 103997 / JCM 8858 / NBRC 14720 / NCIMB 2260 / Gabara) (Halobacterium pharaonis)).